We begin with the raw amino-acid sequence, 642 residues long: Fimbrin (642 aa).

2 EF-hand domains span residues 16 to 50 (EDLF…KDGD) and 51 to 86 (ATYD…LRES). Residues Asp-29, Asp-31, Trp-35, Asp-66, Ser-68, Arg-70, and Asp-75 each coordinate Ca(2+). Actin-binding regions lie at residues 125–394 (IVAG…GLEP) and 395–642 (IQEE…TLNK). 4 Calponin-homology (CH) domains span residues 139 to 259 (EEER…RRGL), 287 to 390 (LPPE…NTHP), 411 to 521 (EREA…RRNI), and 534 to 642 (DMSD…TLNK).

Functionally, binds to actin, and functionally associates with actin structures involved in the development and maintenance of cell polarity. The chain is Fimbrin (SAC6) from Saccharomyces cerevisiae (strain ATCC 204508 / S288c) (Baker's yeast).